The chain runs to 481 residues: Proline--tRNA ligase (481 aa).

The protein belongs to the class-II aminoacyl-tRNA synthetase family. ProS type 3 subfamily. Homodimer.

It is found in the cytoplasm. The enzyme catalyses tRNA(Pro) + L-proline + ATP = L-prolyl-tRNA(Pro) + AMP + diphosphate. Catalyzes the attachment of proline to tRNA(Pro) in a two-step reaction: proline is first activated by ATP to form Pro-AMP and then transferred to the acceptor end of tRNA(Pro). This chain is Proline--tRNA ligase, found in Chlorobium chlorochromatii (strain CaD3).